Here is a 176-residue protein sequence, read N- to C-terminus: Ribosome rescue factor SmrB (176 aa).

The 76-residue stretch at 97-172 folds into the Smr domain; sequence LDMHGMTQQE…GDGALLVLLS (76 aa).

The protein belongs to the SmrB family. Associates with collided ribosomes, but not with correctly translating polysomes.

Its function is as follows. Acts as a ribosome collision sensor. Detects stalled/collided disomes (pairs of ribosomes where the leading ribosome is stalled and a second ribosome has collided with it) and endonucleolytically cleaves mRNA at the 5' boundary of the stalled ribosome. Stalled/collided disomes form a new interface (primarily via the 30S subunits) that binds SmrB. Cleaved mRNA becomes available for tmRNA ligation, leading to ribosomal subunit dissociation and rescue of stalled ribosomes. This chain is Ribosome rescue factor SmrB, found in Vibrio campbellii (strain ATCC BAA-1116).